The following is a 176-amino-acid chain: 3-hydroxyacyl-[acyl-carrier-protein] dehydratase FabZ (176 aa).

H54 is an active-site residue.

This sequence belongs to the thioester dehydratase family. FabZ subfamily.

The protein localises to the cytoplasm. It catalyses the reaction a (3R)-hydroxyacyl-[ACP] = a (2E)-enoyl-[ACP] + H2O. Its function is as follows. Involved in unsaturated fatty acids biosynthesis. Catalyzes the dehydration of short chain beta-hydroxyacyl-ACPs and long chain saturated and unsaturated beta-hydroxyacyl-ACPs. The polypeptide is 3-hydroxyacyl-[acyl-carrier-protein] dehydratase FabZ (Yersinia pseudotuberculosis serotype O:1b (strain IP 31758)).